The following is a 198-amino-acid chain: Probable septum site-determining protein MinC (198 aa).

This sequence belongs to the MinC family. Interacts with MinD and FtsZ.

Cell division inhibitor that blocks the formation of polar Z ring septums. Rapidly oscillates between the poles of the cell to destabilize FtsZ filaments that have formed before they mature into polar Z rings. Prevents FtsZ polymerization. This Thermosipho melanesiensis (strain DSM 12029 / CIP 104789 / BI429) protein is Probable septum site-determining protein MinC.